The primary structure comprises 81 residues: Photosystem I iron-sulfur center (81 aa).

4Fe-4S ferredoxin-type domains follow at residues 2-31 (SHKI…MIPW) and 39-68 (IASA…VRVY). The [4Fe-4S] cluster site is built by Cys-11, Cys-14, Cys-17, Cys-21, Cys-48, Cys-51, Cys-54, and Cys-58.

In terms of assembly, the eukaryotic PSI reaction center is composed of at least 11 subunits. [4Fe-4S] cluster serves as cofactor.

The protein localises to the plastid. The protein resides in the chloroplast thylakoid membrane. The catalysed reaction is reduced [plastocyanin] + hnu + oxidized [2Fe-2S]-[ferredoxin] = oxidized [plastocyanin] + reduced [2Fe-2S]-[ferredoxin]. Its function is as follows. Apoprotein for the two 4Fe-4S centers FA and FB of photosystem I (PSI); essential for photochemical activity. FB is the terminal electron acceptor of PSI, donating electrons to ferredoxin. The C-terminus interacts with PsaA/B/D and helps assemble the protein into the PSI complex. Required for binding of PsaD and PsaE to PSI. PSI is a plastocyanin-ferredoxin oxidoreductase, converting photonic excitation into a charge separation, which transfers an electron from the donor P700 chlorophyll pair to the spectroscopically characterized acceptors A0, A1, FX, FA and FB in turn. The protein is Photosystem I iron-sulfur center of Chara vulgaris (Common stonewort).